Consider the following 113-residue polypeptide: Large ribosomal subunit protein bL19 (113 aa).

Belongs to the bacterial ribosomal protein bL19 family.

Its function is as follows. This protein is located at the 30S-50S ribosomal subunit interface and may play a role in the structure and function of the aminoacyl-tRNA binding site. In Corynebacterium jeikeium (strain K411), this protein is Large ribosomal subunit protein bL19.